A 1183-amino-acid chain; its full sequence is DNA-directed RNA polymerase subunit beta (1183 aa).

The tract at residues 1155–1183 is disordered; that stretch reads ADVDEDDVNEHKVNIQQSSIPESQKETTD.

It belongs to the RNA polymerase beta chain family. In terms of assembly, the RNAP catalytic core consists of 2 alpha, 1 beta, 1 beta' and 1 omega subunit. When a sigma factor is associated with the core the holoenzyme is formed, which can initiate transcription.

The enzyme catalyses RNA(n) + a ribonucleoside 5'-triphosphate = RNA(n+1) + diphosphate. Functionally, DNA-dependent RNA polymerase catalyzes the transcription of DNA into RNA using the four ribonucleoside triphosphates as substrates. The protein is DNA-directed RNA polymerase subunit beta of Staphylococcus carnosus (strain TM300).